The sequence spans 294 residues: 33 kDa chaperonin (294 aa).

Cystine bridges form between cysteine 239–cysteine 241 and cysteine 272–cysteine 275.

Belongs to the HSP33 family. In terms of processing, under oxidizing conditions two disulfide bonds are formed involving the reactive cysteines. Under reducing conditions zinc is bound to the reactive cysteines and the protein is inactive.

It localises to the cytoplasm. Its function is as follows. Redox regulated molecular chaperone. Protects both thermally unfolding and oxidatively damaged proteins from irreversible aggregation. Plays an important role in the bacterial defense system toward oxidative stress. The chain is 33 kDa chaperonin from Listeria monocytogenes serotype 4b (strain CLIP80459).